A 79-amino-acid polypeptide reads, in one-letter code: Cytochrome b (79 aa).

The next 3 helical transmembrane spans lie at 1–7 (TALLLAM), 31–52 (WLIRNLHANGASMFFICIYLHI), and 67–79 (WNIGVILLLTLMA). Positions 37 and 51 each coordinate heme b.

It belongs to the cytochrome b family. The cytochrome bc1 complex contains 11 subunits: 3 respiratory subunits (MT-CYB, CYC1 and UQCRFS1), 2 core proteins (UQCRC1 and UQCRC2) and 6 low-molecular weight proteins (UQCRH/QCR6, UQCRB/QCR7, UQCRQ/QCR8, UQCR10/QCR9, UQCR11/QCR10 and a cleavage product of UQCRFS1). This cytochrome bc1 complex then forms a dimer. Heme b serves as cofactor.

It localises to the mitochondrion inner membrane. Its function is as follows. Component of the ubiquinol-cytochrome c reductase complex (complex III or cytochrome b-c1 complex) that is part of the mitochondrial respiratory chain. The b-c1 complex mediates electron transfer from ubiquinol to cytochrome c. Contributes to the generation of a proton gradient across the mitochondrial membrane that is then used for ATP synthesis. This chain is Cytochrome b (MT-CYB), found in Corcorax melanoramphos (White-winged chough).